The sequence spans 214 residues: Ependymin (214 aa).

The first 20 residues, 1–20 (MHTVKLLCVVFSCLCAVAWA), serve as a signal peptide directing secretion. Asn-70 and Asn-93 each carry an N-linked (GlcNAc...) asparagine glycan.

Belongs to the ependymin family. In terms of assembly, forms disulfide-linked dimers. In terms of processing, binds calcium through the terminal sialic acids.

The protein resides in the secreted. Functionally, may play a role in neural plasticity. May be involved during axon regeneration. The sequence is that of Ependymin (epd) from Notemigonus crysoleucas (Golden shiner).